A 271-amino-acid polypeptide reads, in one-letter code: MEALPLLAATTPDHGRHRRLLLLPLLLFLLPAGAVQGWETEERPRTREEECHFYAGGQVYPGEASRVSVADHSLHLSKAKISKPAPYWEGTAVIDGEFKELKLTDYRGKYLVFFFYPLDFTFVCPTEIIAFGDRLEEFRSINTEVVACSVDSQFTHLAWINTPRRQGGLGPIRIPLLSDLTHQISKDYGVYLEDSGHTLRGLFIIDDKGILRQITLNDLPVGRSVDETLRLVQAFQYTDKHGEVCPAGWKPGSETIIPDPAGKLKYFDKLN.

The first 37 residues, 1–37 (MEALPLLAATTPDHGRHRRLLLLPLLLFLLPAGAVQG), serve as a signal peptide directing secretion. The region spanning 79-237 (AKISKPAPYW…TLRLVQAFQY (159 aa)) is the Thioredoxin domain. Cysteine 124 functions as the Cysteine sulfenic acid (-SOH) intermediate in the catalytic mechanism.

It belongs to the peroxiredoxin family. AhpC/Prx1 subfamily. As to quaternary structure, homodimer; disulfide-linked, upon oxidation. 5 homodimers assemble to form a ring-like decamer. Can form heterodimers with PRDX1. The enzyme can be inactivated by further oxidation of the cysteine sulfenic acid (C(P)-SOH) to sulphinic acid (C(P)-SO2H) and sulphonic acid (C(P)-SO3H) instead of its condensation to a disulfide bond.

It is found in the cytoplasm. The protein localises to the endoplasmic reticulum. The catalysed reaction is a hydroperoxide + [thioredoxin]-dithiol = an alcohol + [thioredoxin]-disulfide + H2O. In terms of biological role, thiol-specific peroxidase that catalyzes the reduction of hydrogen peroxide and organic hydroperoxides to water and alcohols, respectively. Plays a role in cell protection against oxidative stress by detoxifying peroxides and as sensor of hydrogen peroxide-mediated signaling events. Regulates the activation of NF-kappa-B in the cytosol by a modulation of I-kappa-B-alpha phosphorylation. The sequence is that of Peroxiredoxin-4 (PRDX4) from Homo sapiens (Human).